A 508-amino-acid chain; its full sequence is Probable cytosol aminopeptidase (508 aa).

Mn(2+) contacts are provided by K276 and D281. K288 is a catalytic residue. Mn(2+) contacts are provided by D299, D358, and E360. Residue R362 is part of the active site.

Belongs to the peptidase M17 family. Mn(2+) is required as a cofactor.

The protein resides in the cytoplasm. It carries out the reaction Release of an N-terminal amino acid, Xaa-|-Yaa-, in which Xaa is preferably Leu, but may be other amino acids including Pro although not Arg or Lys, and Yaa may be Pro. Amino acid amides and methyl esters are also readily hydrolyzed, but rates on arylamides are exceedingly low.. It catalyses the reaction Release of an N-terminal amino acid, preferentially leucine, but not glutamic or aspartic acids.. Its function is as follows. Presumably involved in the processing and regular turnover of intracellular proteins. Catalyzes the removal of unsubstituted N-terminal amino acids from various peptides. The chain is Probable cytosol aminopeptidase from Chlorobium luteolum (strain DSM 273 / BCRC 81028 / 2530) (Pelodictyon luteolum).